Here is a 322-residue protein sequence, read N- to C-terminus: MQNRNIFSWVKEQTTRSISVSIMILIYVITWTSISHAYPIFAQQSYENPREATGRIVCANCHLANKPVDIEVPQAVLPDTVFEAVVRIPYDMQLKQVLSNGKRGSLNVGAVLILPEGFELAPPDRISPEMKEKMGNLSFQNYRPTKKNILVIGPVPGQKYSEITFPILSPDPATKKDVYFLKYPIYVGGNRGRGQIYPDGSKSNNTVYNATAAGIVSKIVRKEKGGYELTIADASEGRQVVDIIPPGPELLVSEGESIKLDQPLTSNPNVGGFGQGDAEIVLQDPSRVQGLFFFFASVILAQIFLVLKKKQFEKVQLSEMNF.

Residues 1–35 form the signal peptide; sequence MQNRNIFSWVKEQTTRSISVSIMILIYVITWTSIS. Heme contacts are provided by Tyr38, Cys58, Cys61, and His62. A helical transmembrane segment spans residues 288–308; it reads VQGLFFFFASVILAQIFLVLK.

The protein belongs to the cytochrome f family. In terms of assembly, the 4 large subunits of the cytochrome b6-f complex are cytochrome b6, subunit IV (17 kDa polypeptide, petD), cytochrome f and the Rieske protein, while the 4 small subunits are PetG, PetL, PetM and PetN. The complex functions as a dimer. Heme serves as cofactor.

Its subcellular location is the plastid. It localises to the chloroplast thylakoid membrane. Its function is as follows. Component of the cytochrome b6-f complex, which mediates electron transfer between photosystem II (PSII) and photosystem I (PSI), cyclic electron flow around PSI, and state transitions. The protein is Cytochrome f of Nandina domestica (Heavenly bamboo).